The primary structure comprises 342 residues: Cytochrome f (342 aa).

The signal sequence occupies residues 1–28 (MKKQWIAGAFGLTAALAGLVSVPQSALA). Heme-binding residues include C48, C51, and H52. Residues 305-325 (VTWLVAFLAAAFICQLLLVLK) form a helical membrane-spanning segment.

The protein belongs to the cytochrome f family. In terms of assembly, the 4 large subunits of the cytochrome b6-f complex are cytochrome b6, subunit IV (17 kDa polypeptide, PetD), cytochrome f and the Rieske protein, while the 4 small subunits are PetG, PetL, PetM and PetN. The complex functions as a dimer. It depends on heme as a cofactor.

The protein resides in the cell inner membrane. In terms of biological role, component of the cytochrome b6-f complex, which mediates electron transfer between photosystem II (PSII) and photosystem I (PSI), cyclic electron flow around PSI, and state transitions. This Gloeobacter violaceus (strain ATCC 29082 / PCC 7421) protein is Cytochrome f (petA).